The following is a 601-amino-acid chain: Replication protein A 70 kDa DNA-binding subunit (601 aa).

The tract at residues 107–172 (MPGKIGDPTP…NTPGGSSKVV (66 aa)) is disordered. The segment covering 124 to 135 (APSTAPAPTARP) has biased composition (low complexity). Polar residues predominate over residues 137–153 (QPQNGSDGSTYRPSAQS). The segment at residues 184–268 (WTIRARVTNK…LKNDYEMTLN (85 aa)) is a DNA-binding region (OB). S370 bears the Phosphoserine mark. The C4-type zinc-finger motif lies at 466 to 488 (CPSKDCNKKVVDQQNGMFRCEKC).

Belongs to the replication factor A protein 1 family. Component of the heterotrimeric canonical replication protein A complex (RPA).

The protein resides in the nucleus. Its subcellular location is the PML body. As part of the heterotrimeric replication protein A complex (RPA/RP-A), binds and stabilizes single-stranded DNA intermediates, that form during DNA replication or upon DNA stress. It prevents their reannealing and in parallel, recruits and activates different proteins and complexes involved in DNA metabolism. Thereby, it plays an essential role both in DNA replication and the cellular response to DNA damage. The sequence is that of Replication protein A 70 kDa DNA-binding subunit (rpa1) from Danio rerio (Zebrafish).